We begin with the raw amino-acid sequence, 300 residues long: 7-methylguanosine phosphate-specific 5'-nucleotidase (300 aa).

The Nucleophile role is filled by Asp41. Mg(2+) is bound by residues Asp41 and Asp43. Residue Asp43 is the Proton donor of the active site. Glu88 lines the CMP pocket. Glu88 is a N(7)-methyl-GMP binding site. Residues 156 to 157 and Lys205 contribute to the substrate site; that span reads SA. Asp230 is a Mg(2+) binding site. Lys256 is subject to N6-acetyllysine.

The protein belongs to the pyrimidine 5'-nucleotidase family. Monomer.

It is found in the cytoplasm. The catalysed reaction is N(7)-methyl-GMP + H2O = N(7)-methylguanosine + phosphate. It carries out the reaction CMP + H2O = cytidine + phosphate. The enzyme catalyses a ribonucleoside 5'-phosphate + H2O = a ribonucleoside + phosphate. In terms of biological role, specifically hydrolyzes 7-methylguanosine monophosphate (m(7)GMP) to 7-methylguanosine and inorganic phosphate. The specific activity for m(7)GMP may protect cells against undesired salvage of m(7)GMP and its incorporation into nucleic acids. Also has weak activity for CMP. UMP and purine nucleotides are poor substrates. This is 7-methylguanosine phosphate-specific 5'-nucleotidase (NT5C3B) from Homo sapiens (Human).